Consider the following 137-residue polypeptide: Global transcriptional regulator Spx (137 aa).

An intrachain disulfide couples cysteine 10 to cysteine 13.

Belongs to the ArsC family. Spx subfamily. As to quaternary structure, interacts with the C-terminal domain of the alpha subunit of the RNAP.

The protein localises to the cytoplasm. In terms of biological role, global transcriptional regulator that plays a key role in stress response and exerts either positive or negative regulation of genes. Acts by interacting with the C-terminal domain of the alpha subunit of the RNA polymerase (RNAP). This interaction can enhance binding of RNAP to the promoter region of target genes and stimulate their transcription, or block interaction of RNAP with activator. This is Global transcriptional regulator Spx from Streptococcus agalactiae serotype III (strain NEM316).